We begin with the raw amino-acid sequence, 87 residues long: MEESGFREPVLDAKSEVTGQLIDFQWKLGMAVSSDSCRSLKYPYVAVMLKVADHSGQVSSKSIEMTIPQFQNFYKQFKEIAAVIETV.

Met1 carries the N-acetylmethionine modification. Positions 20-87 (QLIDFQWKLG…KEIAAVIETV (68 aa)) constitute a COMM domain.

Belongs to the COMM domain-containing protein 6 family. In terms of assembly, component of the commander complex consisting of the CCC subcomplex and the retriever subcomplex. Component of the CCC (COMMD/CCDC22/CCDC93) subcomplex consisting of COMMD1, COMMD2, COMMD3, COMMD4, COMMD5, COMMD6, COMMD7, COMMD8, COMMD9, COMMD10, CCDC22 and CCDC93; within the complex forms a heterodimer with COMMD1. May form a homodimer with isoform 1. Interacts with RELA, RELB, NFKB1/p105. Does not interact with NFKBIB. Interacts with CCDC22, CCDC93, SCNN1B, CUL4A.

The protein resides in the nucleus. It localises to the cytoplasm. In terms of biological role, scaffold protein in the commander complex that is essential for endosomal recycling of transmembrane cargos; the commander complex is composed of the CCC subcomplex and the retriever subcomplex. May modulate activity of cullin-RING E3 ubiquitin ligase (CRL) complexes. Down-regulates activation of NF-kappa-B. Inhibits TNF-induced NFKB1 activation. This is COMM domain-containing protein 6 (Commd6) from Mus musculus (Mouse).